The sequence spans 221 residues: GTP-binding nuclear protein Ran-B1 (221 aa).

Positions 10–174 (DYPSFKLVIV…LYLARKLAGD (165 aa)) constitute a Small GTPase Ran-type domain. 21–28 (DGGTGKTT) contributes to the GTP binding site. The interval 40-48 (KKYEPTIGV) is switch-I. GTP-binding positions include Gly71, 125 to 128 (NKVD), and 153 to 155 (SAK). A switch-II region spans residues 71-87 (GQEKFGGLRDGYYIHGQ).

This sequence belongs to the small GTPase superfamily. Ran family. In terms of assembly, found in a nuclear export complex with RanGTP, exportin and pre-miRNA.

It is found in the nucleus. Functionally, GTP-binding protein involved in nucleocytoplasmic transport. Required for the import of protein into the nucleus and also for RNA export. Involved in chromatin condensation and control of cell cycle. The chain is GTP-binding nuclear protein Ran-B1 (RAN-B1) from Nicotiana tabacum (Common tobacco).